Here is a 327-residue protein sequence, read N- to C-terminus: uncharacterized protein (327 aa).

Positions 32–105 (VRLDKWLAEQ…IPLDILYEDE (74 aa)) constitute an S4 RNA-binding domain. Aspartate 156 is an active-site residue.

The protein belongs to the pseudouridine synthase RluA family.

It carries out the reaction a uridine in RNA = a pseudouridine in RNA. This is an uncharacterized protein from Synechocystis sp. (strain ATCC 27184 / PCC 6803 / Kazusa).